Reading from the N-terminus, the 103-residue chain is Large ribosomal subunit protein uL24 (103 aa).

Belongs to the universal ribosomal protein uL24 family. In terms of assembly, part of the 50S ribosomal subunit.

Functionally, one of two assembly initiator proteins, it binds directly to the 5'-end of the 23S rRNA, where it nucleates assembly of the 50S subunit. Its function is as follows. One of the proteins that surrounds the polypeptide exit tunnel on the outside of the subunit. In Oceanobacillus iheyensis (strain DSM 14371 / CIP 107618 / JCM 11309 / KCTC 3954 / HTE831), this protein is Large ribosomal subunit protein uL24.